Here is a 922-residue protein sequence, read N- to C-terminus: MVCEMETDQIEEMDVEVLSSMWPEDVGTEADKQFNVEKPAGDLDTLKEVTIETRTIADMTRLPNLLNSTHQGSSQLTNLVKQWEYMQDNAVRLLKEELKNLDRQREEAEAKELKIIEEYKFESNEPENVPVLDETSDLFRRFRQKKRDALVDSKKIEIYEEFDTVAYWKQKALSLEKMLEASTERERRLMEKLSESLKTMESQSAPVQELTQNLKRAEGFLHFILQNAPIVMGHQDKDLRYLFIYNKYPSLREQDILGKTDVEIFHGGGVKESEDFKREVLEKGKASKREITFTTDLFGSKTFLIYVEPVYNKAGEKIGINYMGMEVTDQVVKREKMAKLREDNAVRKAMESELNKTIHITEETMRAKQMLATMSHEIRSPLSGVVGMAEILSTTKLDKEQRQLLNVMISSGDLVLQLINDILDLSKVESGVMRLEATKFRPREVVKHVLQTAAASLKKSLTLEGNIADDVPIEVVGDVLRIRQILTNLISNAIKFTHEGNVGIKLQVISEPSFVRDNALNADTEEHEQNGLTETSVWICCDVWDTGIGIPENALPCLFKKYMQASADHARKYGGTGLGLAICKQLVELMGGQLTVTSRVSEGSTFTFILPYKVGRSDDYSDDQDEFSDMADQQSEPDDTAEGYFQFKPLLGSIYSNGGPGISNDFLPHKVMLTSPIKLINGFVADPSNNTGQSEMLQLENGGYMDESKLETSSGHCPESAHQYENGNGRCFSKESESCSSSQASSEGGTLEMESELTVSSHREEEKAETEVKETSKPKILLVEDNKINIMVAKSMMKQLGHTMDIANNGVEAITAINSSSYDLVLMDVCMPVLDGLKATRLIRSYEETGNWNAAIEAGVDISTSENEQVCMRPTNRLPIIAMTANTLAESSEECYANGMDSFISKPVTLQKLRECLQQYLH.

Coiled-coil stretches lie at residues 86 to 120 (MQDNAVRLLKEELKNLDRQREEAEAKELKIIEEYK) and 169 to 205 (KQKALSLEKMLEASTERERRLMEKLSESLKTMESQSA). Residues 373 to 614 (TMSHEIRSPL…TFTFILPYKV (242 aa)) form the Histidine kinase domain. Residue His-376 is modified to Phosphohistidine; by autocatalysis. Disordered stretches follow at residues 620-639 (YSDDQDEFSDMADQQSEPDD) and 728-773 (NGRC…TEVK). Over residues 738 to 747 (SCSSSQASSE) the composition is skewed to low complexity. Residues 761–773 (SHREEEKAETEVK) show a composition bias toward basic and acidic residues. Residues 779–921 (KILLVEDNKI…KLRECLQQYL (143 aa)) form the Response regulatory domain. Asp-785, Asp-828, and Cys-830 together coordinate Mg(2+). Residue Asp-828 is modified to 4-aspartylphosphate.

Interacts with AHP1, APH2, APH3, APH5 and APH6, but not with APH4. As to expression, present in light-grown but not in etiolated seedlings. Mostly expressed in roots flowers and siliques, and, to a lower extent, in stems and leaves, especially in guard cells.

The protein resides in the cell membrane. It localises to the cytoplasm. The enzyme catalyses ATP + protein L-histidine = ADP + protein N-phospho-L-histidine.. Its function is as follows. Functions as a histidine kinase and transmits the stress signal to a downstream MAPK cascade. This protein undergoes an ATP-dependent autophosphorylation at a conserved histidine residue in the kinase core, and a phosphoryl group is then transferred to a conserved aspartate residue in the receiver domain. Negative regulator of the ETR1-dependent abscisic acid (ABA) and ethylene signaling pathway that inhibits the root elongation. Promotes stomatal closure. Regulates stomatal opening by integrating multiple signals via hydrogen peroxide H(2)O(2) homeostasis in guard cells in an ABA-independent manner. May contribute to basal defense mechanisms by closing stomata in the presence of bacterial pathogens. Regulates both hormone levels and ROS production in response to stress. Required for full immunity to bacterial pathogen and necrotrophic fungus. The protein is Histidine kinase 5 (AHK5) of Arabidopsis thaliana (Mouse-ear cress).